Here is a 342-residue protein sequence, read N- to C-terminus: MNHSLKPWNTFGIDHNAQHIVCAEDEQQLLNAWQHATAEGQPVLILGEGSNVLFLEDYRGTVIINRIKGIEIHDEPDAWYLHVGAGENWHRLVKYTLQEGMPGLENLALIPGCVGSSPIQNIGAYGVELQRVCAYVDCVELATGKQVRLTAKECRFGYRDSIFKHEYQDRFAIVAVGLRLPKEWQPVLTYGDLTRLEPTTVTPQQVFNAVCHMRTTKLPDPKVNGNAGSFFKNPVVSAETAKALLSQFPTAPNYPQADGSVKLAAGWLIDQCQLKGMQMGGAAVHRQQALVLINEDNAKSEDVVQLAHHVRQKVGEKFNVWLEPEVRFIGASGEVSAVETIS.

Positions 13–183 constitute an FAD-binding PCMH-type domain; it reads IDHNAQHIVC…VAVGLRLPKE (171 aa). Arg-159 is a catalytic residue. The active-site Proton donor is the Ser-229. Residue Glu-325 is part of the active site.

The protein belongs to the MurB family. It depends on FAD as a cofactor.

Its subcellular location is the cytoplasm. It carries out the reaction UDP-N-acetyl-alpha-D-muramate + NADP(+) = UDP-N-acetyl-3-O-(1-carboxyvinyl)-alpha-D-glucosamine + NADPH + H(+). Its pathway is cell wall biogenesis; peptidoglycan biosynthesis. Cell wall formation. In Shigella dysenteriae serotype 1 (strain Sd197), this protein is UDP-N-acetylenolpyruvoylglucosamine reductase.